The primary structure comprises 485 residues: Probable alginate O-acetylase AlgI (485 aa).

9 helical membrane-spanning segments follow: residues 7–24, 39–61, 78–100, 115–137, 150–172, 312–334, 360–382, 402–424, and 461–483; these read VFLF…YLSG, FYAW…NYWI, WLLL…NFGV, FILT…ISYI, NLID…VLRF, FLTM…WGAW, AFTF…HVAA, AQLT…FFGL, and ILLL…FLYF. The active site involves His-322.

This sequence belongs to the membrane-bound acyltransferase family.

Its subcellular location is the cell inner membrane. Its pathway is glycan biosynthesis; alginate biosynthesis. Its function is as follows. Together with AlgJ and AlgF, forms an inner membrane complex which probably interacts with the alginate polymerization-transport complex and adds acetyl groups at the O-2 and O-3 positions of mannuronate residues. Acetylation of alginate is important for the architecture of biofilms and increases the ability of alginate to act as a defense barrier. This is Probable alginate O-acetylase AlgI (algI) from Pseudomonas putida (strain ATCC 47054 / DSM 6125 / CFBP 8728 / NCIMB 11950 / KT2440).